The sequence spans 345 residues: Tryptophan--tRNA ligase (345 aa).

Residues 22–24 and 30–31 contribute to the ATP site; these read QPS and GN. A 'HIGH' region motif is present at residues 23–31; that stretch reads PSGELTIGN. Asp-146 contributes to the L-tryptophan binding site. ATP is bound by residues 158-160, Val-197, and 206-210; these read GID and KMSKS. The 'KMSKS' region signature appears at 206 to 210; the sequence is KMSKS.

Belongs to the class-I aminoacyl-tRNA synthetase family. In terms of assembly, homodimer.

Its subcellular location is the cytoplasm. It catalyses the reaction tRNA(Trp) + L-tryptophan + ATP = L-tryptophyl-tRNA(Trp) + AMP + diphosphate + H(+). Functionally, catalyzes the attachment of tryptophan to tRNA(Trp). In Photorhabdus laumondii subsp. laumondii (strain DSM 15139 / CIP 105565 / TT01) (Photorhabdus luminescens subsp. laumondii), this protein is Tryptophan--tRNA ligase.